Reading from the N-terminus, the 167-residue chain is Large ribosomal subunit protein uL10 (167 aa).

This sequence belongs to the universal ribosomal protein uL10 family. In terms of assembly, part of the ribosomal stalk of the 50S ribosomal subunit. The N-terminus interacts with L11 and the large rRNA to form the base of the stalk. The C-terminus forms an elongated spine to which L12 dimers bind in a sequential fashion forming a multimeric L10(L12)X complex.

In terms of biological role, forms part of the ribosomal stalk, playing a central role in the interaction of the ribosome with GTP-bound translation factors. In Tolumonas auensis (strain DSM 9187 / NBRC 110442 / TA 4), this protein is Large ribosomal subunit protein uL10.